Consider the following 132-residue polypeptide: AP-2 complex subunit sigma (132 aa).

This sequence belongs to the adaptor complexes small subunit family. In terms of assembly, adaptor protein complex 2 (AP-2) is a heterotetramer composed of two large adaptins (alpha-type and beta-type subunits), a medium adaptin (mu-type subunit AP50) and a small adaptin (sigma-type subunit AP17). Widely expressed in the embryo, endosperm, leaf and root.

It is found in the cell membrane. It localises to the membrane. The protein resides in the coated pit. In terms of biological role, component of the adaptor complexes which link clathrin to receptors in coated vesicles. Clathrin-associated protein complexes are believed to interact with the cytoplasmic tails of membrane proteins, leading to their selection and concentration. AP2S1/AP17 is a subunit of the plasma membrane adaptor. The complex binds polyphosphoinositides. The protein is AP-2 complex subunit sigma (AP-17) of Zea mays (Maize).